A 1377-amino-acid polypeptide reads, in one-letter code: Hemoglobin-binding protease hbp autotransporter (1377 aa).

Positions 1-52 (MNRIYSLRYSAVARGFIAVSEFARKCVHKSVRRLCFPVLLLIPVLFSAGSLA) are cleaved as a signal peptide. In terms of domain architecture, Peptidase S6 spans 53 to 302 (GTVNNELGYQ…AVIPLDFIGQ (250 aa)). Residues His125, Asp153, and Ser259 each act as charge relay system in the active site. Residues 1111–1377 (DINGEAGTWV…AINANIRYSF (267 aa)) form the Autotransporter domain.

In terms of processing, cleaved to release the mature protein from the outer membrane.

The protein resides in the periplasm. Its subcellular location is the secreted. It localises to the cell surface. The protein localises to the cell outer membrane. Its activity is regulated as follows. Protease activity is inhibited by 3,4-dichloroisocoumarin. In terms of biological role, interacts with hemoglobin, degrades it and subsequently binds the released heme. Could make heme accessible not only for E.coli, but also for B.fragilis during mixed intra-abdominal infections. Has a role in abscess formation. The protein is Hemoglobin-binding protease hbp autotransporter (hbp) of Escherichia coli.